Here is a 102-residue protein sequence, read N- to C-terminus: Small ribosomal subunit protein uS10 (102 aa).

It belongs to the universal ribosomal protein uS10 family. As to quaternary structure, part of the 30S ribosomal subunit.

Its function is as follows. Involved in the binding of tRNA to the ribosomes. In Parvibaculum lavamentivorans (strain DS-1 / DSM 13023 / NCIMB 13966), this protein is Small ribosomal subunit protein uS10.